Reading from the N-terminus, the 265-residue chain is Histone H1 (265 aa).

Positions 1-27 (MATEEPIVAVETVPEPIVTEPTTITEP) are enriched in low complexity. Disordered stretches follow at residues 1 to 66 (MATE…PTYE), 131 to 226 (AAKK…TTPG), and 242 to 265 (VKSV…GGRK). A compositionally biased stretch (basic and acidic residues) spans 29-42 (VPEKEEPKAEVEKT). Positions 43-55 (KKAKGSKPKKASK) are enriched in basic residues. The H15 domain maps to 61–130 (SHPTYEEMIK…KVKGSFKLSA (70 aa)). Residues 140–171 (PKAKTAAKAKSVKAKPAAKPKAKAVVKPKVAS) show a composition bias toward basic residues. The span at 186–202 (KPKTVAAKTKPTAAKPK) shows a compositional bias: low complexity. The span at 203 to 215 (AVVKPKSKVKPAK) shows a compositional bias: basic residues. Residues 216-226 (VAKTSVKTTPG) are compositionally biased toward low complexity.

The protein belongs to the histone H1/H5 family.

The protein resides in the nucleus. It is found in the chromosome. Its function is as follows. Histones H1 are necessary for the condensation of nucleosome chains into higher-order structures. This is Histone H1 from Pisum sativum (Garden pea).